A 329-amino-acid polypeptide reads, in one-letter code: Ketol-acid reductoisomerase (NADP(+)) (329 aa).

Positions 2 to 181 constitute a KARI N-terminal Rossmann domain; that stretch reads MKKYYESDAD…GATRAVVLET (180 aa). Residues 25–28, R48, S52, and 82–85 each bind NADP(+); these read YGSQ and DELQ. H107 is a catalytic residue. G133 is a binding site for NADP(+). Residues 182–327 enclose the KARI C-terminal knotted domain; the sequence is TFREETETDL…KEVRAMMPQF (146 aa). Mg(2+) is bound by residues D190, E194, E226, and E230. Substrate is bound at residue S251.

Belongs to the ketol-acid reductoisomerase family. Requires Mg(2+) as cofactor.

It catalyses the reaction (2R)-2,3-dihydroxy-3-methylbutanoate + NADP(+) = (2S)-2-acetolactate + NADPH + H(+). It carries out the reaction (2R,3R)-2,3-dihydroxy-3-methylpentanoate + NADP(+) = (S)-2-ethyl-2-hydroxy-3-oxobutanoate + NADPH + H(+). Its pathway is amino-acid biosynthesis; L-isoleucine biosynthesis; L-isoleucine from 2-oxobutanoate: step 2/4. It functions in the pathway amino-acid biosynthesis; L-valine biosynthesis; L-valine from pyruvate: step 2/4. Functionally, involved in the biosynthesis of branched-chain amino acids (BCAA). Catalyzes an alkyl-migration followed by a ketol-acid reduction of (S)-2-acetolactate (S2AL) to yield (R)-2,3-dihydroxy-isovalerate. In the isomerase reaction, S2AL is rearranged via a Mg-dependent methyl migration to produce 3-hydroxy-3-methyl-2-ketobutyrate (HMKB). In the reductase reaction, this 2-ketoacid undergoes a metal-dependent reduction by NADPH to yield (R)-2,3-dihydroxy-isovalerate. This chain is Ketol-acid reductoisomerase (NADP(+)), found in Methanoregula boonei (strain DSM 21154 / JCM 14090 / 6A8).